A 104-amino-acid chain; its full sequence is MTYAIIEASGKQLWIEEGRYYDLNHIPVEPGQSIILGKVLLLNKDGHVSLGHPCIEGAVIKATVMRHLRGKKITVFKMKPKKKMRLKKGHRQELTRLMIDSIMT.

This sequence belongs to the bacterial ribosomal protein bL21 family. As to quaternary structure, part of the 50S ribosomal subunit.

Its subcellular location is the plastid. The protein localises to the chloroplast. Its function is as follows. This protein binds to 23S rRNA. The sequence is that of Large ribosomal subunit protein bL21c from Porphyra purpurea (Red seaweed).